The following is a 357-amino-acid chain: Phosphoribosylformylglycinamidine cyclo-ligase (357 aa).

It belongs to the AIR synthase family.

The protein resides in the cytoplasm. The enzyme catalyses 2-formamido-N(1)-(5-O-phospho-beta-D-ribosyl)acetamidine + ATP = 5-amino-1-(5-phospho-beta-D-ribosyl)imidazole + ADP + phosphate + H(+). Its pathway is purine metabolism; IMP biosynthesis via de novo pathway; 5-amino-1-(5-phospho-D-ribosyl)imidazole from N(2)-formyl-N(1)-(5-phospho-D-ribosyl)glycinamide: step 2/2. The chain is Phosphoribosylformylglycinamidine cyclo-ligase from Agrobacterium fabrum (strain C58 / ATCC 33970) (Agrobacterium tumefaciens (strain C58)).